The primary structure comprises 905 residues: Nitrate reductase [NADPH] (905 aa).

Positions 1-42 (METSTTTTLLQQERIPENSEPISTHIHTHSLPPTPPGTAKPS) are disordered. Cysteine 179 provides a ligand contact to Mo-molybdopterin. The region spanning 546–621 (NRKITIEELK…LPTYHIGTLD (76 aa)) is the Cytochrome b5 heme-binding domain. Residues histidine 581 and histidine 604 each coordinate heme. The FAD-binding FR-type domain maps to 648–759 (KTWSKAILDK…KGPTGKFVYH (112 aa)). Residues 702-705 (RSYT), 719-723 (LIKIY), 733-735 (VMT), serine 783, and threonine 786 each bind FAD. Position 875–884 (875–884 (LLLVCGPPPM)) interacts with NADP(+).

This sequence belongs to the nitrate reductase family. As to quaternary structure, homodimer. FAD serves as cofactor. It depends on heme as a cofactor. The cofactor is Mo-molybdopterin.

It carries out the reaction nitrite + NADP(+) + H2O = nitrate + NADPH + H(+). Its function is as follows. Nitrate reductase is a key enzyme involved in the first step of nitrate assimilation in plants, fungi and bacteria. The protein is Nitrate reductase [NADPH] (NIA) of Fusarium oxysporum (Fusarium vascular wilt).